Consider the following 464-residue polypeptide: ATP synthase subunit beta (464 aa).

ATP is bound at residue 153–160 (GGAGVGKT).

Belongs to the ATPase alpha/beta chains family. As to quaternary structure, F-type ATPases have 2 components, CF(1) - the catalytic core - and CF(0) - the membrane proton channel. CF(1) has five subunits: alpha(3), beta(3), gamma(1), delta(1), epsilon(1). CF(0) has three main subunits: a(1), b(2) and c(9-12). The alpha and beta chains form an alternating ring which encloses part of the gamma chain. CF(1) is attached to CF(0) by a central stalk formed by the gamma and epsilon chains, while a peripheral stalk is formed by the delta and b chains.

Its subcellular location is the cell inner membrane. The enzyme catalyses ATP + H2O + 4 H(+)(in) = ADP + phosphate + 5 H(+)(out). Functionally, produces ATP from ADP in the presence of a proton gradient across the membrane. The catalytic sites are hosted primarily by the beta subunits. The polypeptide is ATP synthase subunit beta (Burkholderia cenocepacia (strain ATCC BAA-245 / DSM 16553 / LMG 16656 / NCTC 13227 / J2315 / CF5610) (Burkholderia cepacia (strain J2315))).